A 733-amino-acid chain; its full sequence is DNA-binding protein SATB2 (733 aa).

The segment at methionine 1–proline 47 is disordered. Position 20 is a phosphoserine (serine 20). Glycyl lysine isopeptide (Lys-Gly) (interchain with G-Cter in SUMO2) cross-links involve residues lysine 24 and lysine 30. Position 39 is a phosphoserine (serine 39). A CMP domain is found at glycine 57–serine 158. A Glycyl lysine isopeptide (Lys-Gly) (interchain with G-Cter in SUMO2) cross-link involves residue lysine 161. In terms of domain architecture, CUTL spans lysine 161–valine 234. Residue lysine 233 forms a Glycyl lysine isopeptide (Lys-Gly) (interchain with G-Cter in SUMO) linkage. Lysine 350 participates in a covalent cross-link: Glycyl lysine isopeptide (Lys-Gly) (interchain with G-Cter in SUMO); alternate. A Glycyl lysine isopeptide (Lys-Gly) (interchain with G-Cter in SUMO2); alternate cross-link involves residue lysine 350. Residues lysine 350–arginine 437 constitute a DNA-binding region (CUT 1). The disordered stretch occupies residues aspartate 435 to proline 473. The segment covering methionine 441–serine 458 has biased composition (low complexity). Serine 454 carries the post-translational modification Phosphoserine. Residues arginine 459–threonine 470 are compositionally biased toward polar residues. Position 467 is a phosphothreonine (threonine 467). The segment at residues proline 473–serine 560 is a DNA-binding region (CUT 2). Lysine 475 is covalently cross-linked (Glycyl lysine isopeptide (Lys-Gly) (interchain with G-Cter in SUMO2)). Low complexity predominate over residues glutamine 580–serine 593. Disordered regions lie at residues glutamine 580 to serine 617 and leucine 694 to arginine 733. Serine 594 bears the Phosphoserine mark. Residues proline 615–glycine 674 constitute a DNA-binding region (homeobox). Residues leucine 694–glutamate 708 show a composition bias toward acidic residues. Basic and acidic residues predominate over residues glutamate 709 to arginine 733. Lysine 724 participates in a covalent cross-link: Glycyl lysine isopeptide (Lys-Gly) (interchain with G-Cter in SUMO2).

This sequence belongs to the CUT homeobox family. Interacts with ATF4 and RUNX2; resulting in enhanced DNA binding and transactivation by these transcription factors. Interacts with PIAS1. Sumoylated by PIAS1. Sumoylation promotes nuclear localization, but represses transcription factor activity. As to expression, high expression in adult brain, moderate expression in fetal brain, and weak expression in adult liver, kidney, and spinal cord and in select brain regions, including amygdala, corpus callosum, caudate nucleus, and hippocampus.

The protein localises to the nucleus matrix. In terms of biological role, binds to DNA, at nuclear matrix- or scaffold-associated regions. Thought to recognize the sugar-phosphate structure of double-stranded DNA. Transcription factor controlling nuclear gene expression, by binding to matrix attachment regions (MARs) of DNA and inducing a local chromatin-loop remodeling. Acts as a docking site for several chromatin remodeling enzymes and also by recruiting corepressors (HDACs) or coactivators (HATs) directly to promoters and enhancers. Required for the initiation of the upper-layer neurons (UL1) specific genetic program and for the inactivation of deep-layer neurons (DL) and UL2 specific genes, probably by modulating BCL11B expression. Repressor of Ctip2 and regulatory determinant of corticocortical connections in the developing cerebral cortex. May play an important role in palate formation. Acts as a molecular node in a transcriptional network regulating skeletal development and osteoblast differentiation. The chain is DNA-binding protein SATB2 (SATB2) from Homo sapiens (Human).